We begin with the raw amino-acid sequence, 632 residues long: POU domain, class 2, transcription factor 1 (632 aa).

Phosphothreonine is present on residues Thr157 and Thr163. The POU-specific domain occupies Glu167–Glu241. Ser170 is modified (phosphoserine). Residues Leu243–Pro258 are compositionally biased toward low complexity. The tract at residues Leu243–Thr273 is disordered. A DNA-binding region (homeobox) is located at residues Arg268–Asn327. Phosphoserine occurs at positions 274 and 337. The disordered stretch occupies residues Gly385–Ala448. A compositionally biased stretch (low complexity) spans Thr394 to Pro441.

Belongs to the POU transcription factor family. Class-2 subfamily. Interacts with POU2AF1; the interaction increases POU2F1 transactivation activity. Interacts with NR3C1, AR, PGR and HCFC1. Post-translationally, phosphorylated by PRKDC. Widely expressed.

The protein localises to the nucleus. In terms of biological role, transcription factor that binds to the octamer motif (5'-ATTTGCAT-3') and activates the promoters of the genes for some small nuclear RNAs (snRNA) and of genes such as those for histone H2B and immunoglobulins. Modulates transcription transactivation by NR3C1, AR and PGR. This Rattus norvegicus (Rat) protein is POU domain, class 2, transcription factor 1 (Pou2f1).